The chain runs to 306 residues: Pantothenate kinase (306 aa).

An ATP-binding site is contributed by 91–98; it reads GSVAVGKS.

Belongs to the prokaryotic pantothenate kinase family.

It localises to the cytoplasm. The catalysed reaction is (R)-pantothenate + ATP = (R)-4'-phosphopantothenate + ADP + H(+). The protein operates within cofactor biosynthesis; coenzyme A biosynthesis; CoA from (R)-pantothenate: step 1/5. This chain is Pantothenate kinase (coaA), found in Streptococcus pyogenes serotype M18 (strain MGAS8232).